The sequence spans 610 residues: Protein arginine N-methyltransferase 5 (610 aa).

Positions Leu284–Trp587 constitute an SAM-dependent MTase PRMT-type domain. S-adenosyl-L-methionine is bound at residue Tyr300. An a protein-binding site is contributed by Phe303. Residues Lys309–Tyr310, Glu368, and Asp396–Met397 contribute to the S-adenosyl-L-methionine site. Residues Glu412 and Glu421 each coordinate a protein. Active-site proton donor/acceptor residues include Glu412 and Glu421. An interaction with vls region spans residues Ala470–Leu610.

It belongs to the class I-like SAM-binding methyltransferase superfamily. Protein arginine N-methyltransferase family. As to quaternary structure, interacts with vls. Expressed only in ovaries.

It localises to the cytoplasm. Its function is as follows. Arginine methyltransferase that can both catalyze the formation of omega-N monomethylarginine (MMA) and symmetrical dimethylarginine (sDMA). Specifically mediates the symmetrical dimethylation of arginine residues in the small nuclear ribonucleoproteins SmD1 and SmD3. Required for arginine symmetrical dimethylation of piwi family proteins, piwi, aub and AGO3, during germline development. Required during oogenesis for pole cell formation in the pathway controlled by oskar (osk) and for abdominal segments during early embryogenesis. Involved in nanos (nos) and germ cell mRNAs localization. The chain is Protein arginine N-methyltransferase 5 from Drosophila melanogaster (Fruit fly).